The following is a 265-amino-acid chain: 3-methyl-2-oxobutanoate hydroxymethyltransferase (265 aa).

Residues aspartate 46 and aspartate 85 each coordinate Mg(2+). Residues 46–47 (DS), aspartate 85, and lysine 114 each bind 3-methyl-2-oxobutanoate. A Mg(2+)-binding site is contributed by glutamate 116. The active-site Proton acceptor is glutamate 183.

Belongs to the PanB family. In terms of assembly, homodecamer; pentamer of dimers. The cofactor is Mg(2+).

It is found in the cytoplasm. It catalyses the reaction 3-methyl-2-oxobutanoate + (6R)-5,10-methylene-5,6,7,8-tetrahydrofolate + H2O = 2-dehydropantoate + (6S)-5,6,7,8-tetrahydrofolate. Its pathway is cofactor biosynthesis; coenzyme A biosynthesis. Functionally, catalyzes the reversible reaction in which hydroxymethyl group from 5,10-methylenetetrahydrofolate is transferred onto alpha-ketoisovalerate to form ketopantoate. This Caldivirga maquilingensis (strain ATCC 700844 / DSM 13496 / JCM 10307 / IC-167) protein is 3-methyl-2-oxobutanoate hydroxymethyltransferase.